Here is a 120-residue protein sequence, read N- to C-terminus: Large ribosomal subunit protein eL8 (120 aa).

The protein belongs to the eukaryotic ribosomal protein eL8 family. In terms of assembly, part of the 50S ribosomal subunit. Probably part of the RNase P complex.

The protein resides in the cytoplasm. Functionally, multifunctional RNA-binding protein that recognizes the K-turn motif in ribosomal RNA, the RNA component of RNase P, box H/ACA, box C/D and box C'/D' sRNAs. This is Large ribosomal subunit protein eL8 from Haloquadratum walsbyi (strain DSM 16790 / HBSQ001).